The primary structure comprises 467 residues: MSSSLWLQCLQRLQEELPAAEFSMWVRPLQAELNDNTLTLFAPNRFVLDWVRDKYLNNINRLLMEFSGNDVPNLRFEVGSRPVVAPKPAPVRTAADVAAESSAPAQLAQRKPIHKTWDDDSAAADITHRSNVNPKHKFNNFVEGKSNQLGLAAARQVSDNPGAAYNPLFLYGGTGLGKTHLLHAVGNAIVDNNPNAKVVYMHSERFVQDMVKALQNNAIEEFKRYYRSVDALLIDDIQFFANKERSQEEFFHTFNALLEGNQQIILTSDRYPKEISGVEDRLKSRFGWGLTVAIEPPELETRVAILMKKAEDHQIHLPDEVAFFIAKRLRSNVRELEGALNRVIANANFTGRPITIDFVREALRDLLALQEKLVTIDNIQKTVAEYYKIKVADLLSKRRSRSVARPRQLAMALAKELTNHSLPEIGDAFGGRDHTTVLHACRKIEQLREESHDIKEDYSNLIRTLSS.

Residues 1–87 form a domain I, interacts with DnaA modulators region; that stretch reads MSSSLWLQCL…VGSRPVVAPK (87 aa). The interval 87–130 is domain II; the sequence is KPAPVRTAADVAAESSAPAQLAQRKPIHKTWDDDSAAADITHRS. The domain III, AAA+ region stretch occupies residues 131–347; that stretch reads NVNPKHKFNN…GALNRVIANA (217 aa). The ATP site is built by G175, G177, K178, and T179. The segment at 348–467 is domain IV, binds dsDNA; that stretch reads NFTGRPITID…YSNLIRTLSS (120 aa).

Belongs to the DnaA family. Oligomerizes as a right-handed, spiral filament on DNA at oriC.

The protein localises to the cytoplasm. In terms of biological role, plays an essential role in the initiation and regulation of chromosomal replication. ATP-DnaA binds to the origin of replication (oriC) to initiate formation of the DNA replication initiation complex once per cell cycle. Binds the DnaA box (a 9 base pair repeat at the origin) and separates the double-stranded (ds)DNA. Forms a right-handed helical filament on oriC DNA; dsDNA binds to the exterior of the filament while single-stranded (ss)DNA is stabiized in the filament's interior. The ATP-DnaA-oriC complex binds and stabilizes one strand of the AT-rich DNA unwinding element (DUE), permitting loading of DNA polymerase. After initiation quickly degrades to an ADP-DnaA complex that is not apt for DNA replication. Binds acidic phospholipids. The chain is Chromosomal replication initiator protein DnaA from Vibrio cholerae serotype O1 (strain ATCC 39315 / El Tor Inaba N16961).